The primary structure comprises 119 residues: Protein Wnt-4 (119 aa).

Residue S1 is the site of O-palmitoleoyl serine; by PORCN attachment. Intrachain disulfides connect C69–C100 and C85–C95. An N-linked (GlcNAc...) asparagine glycan is attached at N86.

Belongs to the Wnt family. Post-translationally, palmitoleoylation is required for efficient binding to frizzled receptors. Depalmitoleoylation leads to Wnt signaling pathway inhibition.

The protein resides in the secreted. The protein localises to the extracellular space. Its subcellular location is the extracellular matrix. In terms of biological role, ligand for members of the frizzled family of seven transmembrane receptors. Plays an important role in embryonic development. The protein is Protein Wnt-4 (WNT-4) of Plethodon jordani (Red-cheeked salamander).